Here is a 243-residue protein sequence, read N- to C-terminus: Ribosomal RNA small subunit methyltransferase J (243 aa).

S-adenosyl-L-methionine is bound by residues 112-113 (ER) and aspartate 164.

The protein belongs to the methyltransferase superfamily. RsmJ family.

The protein localises to the cytoplasm. It carries out the reaction guanosine(1516) in 16S rRNA + S-adenosyl-L-methionine = N(2)-methylguanosine(1516) in 16S rRNA + S-adenosyl-L-homocysteine + H(+). Functionally, specifically methylates the guanosine in position 1516 of 16S rRNA. In Legionella pneumophila (strain Lens), this protein is Ribosomal RNA small subunit methyltransferase J.